We begin with the raw amino-acid sequence, 273 residues long: 4-hydroxy-tetrahydrodipicolinate reductase (273 aa).

Residues 12–17 (GAGGRM) and Glu38 each bind NAD(+). Arg39 serves as a coordination point for NADP(+). Residues 102–104 (GTT) and 126–129 (AANF) each bind NAD(+). Catalysis depends on His159, which acts as the Proton donor/acceptor. (S)-2,3,4,5-tetrahydrodipicolinate is bound at residue His160. Catalysis depends on Lys163, which acts as the Proton donor. Residue 169 to 170 (GT) participates in (S)-2,3,4,5-tetrahydrodipicolinate binding.

This sequence belongs to the DapB family. Homotetramer.

The protein resides in the cytoplasm. The enzyme catalyses (S)-2,3,4,5-tetrahydrodipicolinate + NAD(+) + H2O = (2S,4S)-4-hydroxy-2,3,4,5-tetrahydrodipicolinate + NADH + H(+). The catalysed reaction is (S)-2,3,4,5-tetrahydrodipicolinate + NADP(+) + H2O = (2S,4S)-4-hydroxy-2,3,4,5-tetrahydrodipicolinate + NADPH + H(+). It participates in amino-acid biosynthesis; L-lysine biosynthesis via DAP pathway; (S)-tetrahydrodipicolinate from L-aspartate: step 4/4. In terms of biological role, catalyzes the conversion of 4-hydroxy-tetrahydrodipicolinate (HTPA) to tetrahydrodipicolinate. The polypeptide is 4-hydroxy-tetrahydrodipicolinate reductase (Escherichia coli O139:H28 (strain E24377A / ETEC)).